Reading from the N-terminus, the 416-residue chain is UDP-N-acetylglucosamine 1-carboxyvinyltransferase (416 aa).

Residue 22-23 coordinates phosphoenolpyruvate; it reads KN. Arginine 91 contacts UDP-N-acetyl-alpha-D-glucosamine. Cysteine 115 serves as the catalytic Proton donor. Cysteine 115 is modified (2-(S-cysteinyl)pyruvic acid O-phosphothioketal). UDP-N-acetyl-alpha-D-glucosamine-binding positions include 120–124, aspartate 305, and isoleucine 327; that span reads RPIDL.

It belongs to the EPSP synthase family. MurA subfamily.

It localises to the cytoplasm. It carries out the reaction phosphoenolpyruvate + UDP-N-acetyl-alpha-D-glucosamine = UDP-N-acetyl-3-O-(1-carboxyvinyl)-alpha-D-glucosamine + phosphate. It functions in the pathway cell wall biogenesis; peptidoglycan biosynthesis. In terms of biological role, cell wall formation. Adds enolpyruvyl to UDP-N-acetylglucosamine. The chain is UDP-N-acetylglucosamine 1-carboxyvinyltransferase from Buchnera aphidicola subsp. Acyrthosiphon pisum (strain APS) (Acyrthosiphon pisum symbiotic bacterium).